A 1556-amino-acid chain; its full sequence is Ferredoxin-dependent glutamate synthase 2 (1556 aa).

Cysteine 37 functions as the For GATase activity in the catalytic mechanism. The Glutamine amidotransferase type-2 domain occupies 37–431 (CGVGFIANLR…PGQMIAVDLA (395 aa)). [3Fe-4S] cluster-binding residues include cysteine 1173, cysteine 1179, and cysteine 1184. The segment at 1533-1556 (PSEKDSPEANGDVSLTGEKTLTSV) is disordered.

It belongs to the glutamate synthase family. [3Fe-4S] cluster is required as a cofactor. The cofactor is FAD. Requires FMN as cofactor.

The enzyme catalyses 2 oxidized [2Fe-2S]-[ferredoxin] + 2 L-glutamate = L-glutamine + 2 reduced [2Fe-2S]-[ferredoxin] + 2-oxoglutarate + 2 H(+). It participates in amino-acid biosynthesis; L-glutamate biosynthesis via GLT pathway; L-glutamate from 2-oxoglutarate and L-glutamine (ferredoxin route): step 1/1. The protein operates within energy metabolism; nitrogen metabolism. The sequence is that of Ferredoxin-dependent glutamate synthase 2 (gltS) from Synechocystis sp. (strain ATCC 27184 / PCC 6803 / Kazusa).